The chain runs to 279 residues: uncharacterized protein (279 aa).

The tract at residues 1 to 28 is disordered; it reads MGLFGGGNSKSTSNQTTNNENTNIATQG. Residues 9–23 show a composition bias toward low complexity; the sequence is SKSTSNQTTNNENTN. The chain crosses the membrane as a helical span at residues 256–273; sequence KTLMIGIVAVSAAVGLYA.

It localises to the host membrane. This is an uncharacterized protein from Pseudoalteromonas espejiana (Bacteriophage PM2).